The primary structure comprises 772 residues: MEPEREGTERHPRKVRKRRQAPNKLVGAAEAMKASWDLEESQPEAKKARLSTILFTDNCEVTHDQLCELLKYAVLGKSNVPKPSWCQLFHQNHLNNVVVFVLQGMSQLHFYRFYLEFGCLRKAFRHKFRLPPPSSDFLADIVGLQTKQRVGDLPKTMEGPLPSNAKATINLQNDPIIQKYGCKKVGLTRCLLTKEEMRTFHFPLQGFPECENFLLTKCNGSIADNSPLFGLDCEMCLTSKGRELTRISLVAEGGCCVMDELVKPENKILDYLTSFSGITKKILNPVTTKLKDVQRQLKALLPPDAVLVGHSLDLDLRALKMIHPYVIDTSLLYVREQGRRFKLKFLAKAILGKDIQCPDRLGHDATEDARIILELAQYFLKYGPKKIAELNLEALANHQEIQAAGQEPRNTTEILQHPNTSVLECLDSVGQKLLFLTRETDAGELASSRNCQTIKCLSNKEVLEQARVEIPLFPFSIVQFSFKAFSPILTEEMNKRMRIKWTEISTVYAGPFSKNCNLRALKRLFKSFGPVQSMTFVLETRQPHLCIQYEVLEAAQLAIESLDGILVDGTCIKVQRPVTELTLDCETLVNELEGDSENQGSIYLFGVSETFKEQLLQEPRLFLGLGAVILPKDLKNGKQKKYCFLKFKSFGSAQRALNILTGKDWKLKGRHALTPRHLHAWLRGLPPESRRPAGLRVVPPPFEQEALQTLKLDHPKIAAWRWGRKIGKLYNSLCPGTLCLILLPGTKSTHGSLSGLGLMGIKEEEESTISGL.

Positions 1–10 are enriched in basic and acidic residues; the sequence is MEPEREGTER. The tract at residues 1-26 is disordered; that stretch reads MEPEREGTERHPRKVRKRRQAPNKLV. Basic residues predominate over residues 11–21; sequence HPRKVRKRRQA. The 149-residue stretch at 228–376 folds into the Exonuclease domain; sequence LFGLDCEMCL…EDARIILELA (149 aa). RRM domains follow at residues 505 to 579 and 600 to 679; these read STVY…RPVT and GSIY…RHLH.

The protein is RNA exonuclease 5 (REXO5) of Macaca fascicularis (Crab-eating macaque).